Consider the following 361-residue polypeptide: Phenylalanine--tRNA ligase alpha subunit (361 aa).

Mg(2+) is bound at residue Glu-260.

It belongs to the class-II aminoacyl-tRNA synthetase family. Phe-tRNA synthetase alpha subunit type 1 subfamily. Tetramer of two alpha and two beta subunits. Mg(2+) is required as a cofactor.

The protein localises to the cytoplasm. It catalyses the reaction tRNA(Phe) + L-phenylalanine + ATP = L-phenylalanyl-tRNA(Phe) + AMP + diphosphate + H(+). This is Phenylalanine--tRNA ligase alpha subunit from Bartonella bacilliformis (strain ATCC 35685 / KC583 / Herrer 020/F12,63).